A 265-amino-acid chain; its full sequence is U6 snRNA phosphodiesterase 1 (265 aa).

Residues 1–22 (MSLVCYESSSSGEDDDETISDN) form a disordered region. His109 functions as the Proton acceptor in the catalytic mechanism. AMP is bound by residues 109–111 (HLS) and 195–201 (DFLLHIS). 197–201 (LLHIS) is a binding site for UMP. Residue His199 is the Proton donor of the active site.

It belongs to the 2H phosphoesterase superfamily. USB1 family.

It localises to the nucleus. It carries out the reaction a 3'-end uridylyl-uridine-RNA = a 3'-end 2',3'-cyclophospho-uridine-RNA + uridine. In terms of biological role, 3'-5' RNA exonuclease that trims the 3' end of oligo(U) tracts of the pre-U6 small nuclear RNA (snRNA) molecule, leading to the formation of a U6 snRNA 3' end-terminated with a 2',3'-cyclic phosphate.d. Participates in the U6 snRNA 3' end processing that prevents U6 snRNA degradation. The polypeptide is U6 snRNA phosphodiesterase 1 (Schizosaccharomyces pombe (strain 972 / ATCC 24843) (Fission yeast)).